The following is a 714-amino-acid chain: Polyribonucleotide nucleotidyltransferase (714 aa).

Positions 496 and 502 each coordinate Mg(2+). Positions 562–621 (PRLLTIKIDPDLIGMVIGPGGKTIKGITEQTRAKVDIADDGTVTIASSESENAEKAKRLI) constitute a KH domain. The 69-residue stretch at 631–699 (GDVYFGKVTR…NKGRINLTRL (69 aa)) folds into the S1 motif domain.

Belongs to the polyribonucleotide nucleotidyltransferase family. Requires Mg(2+) as cofactor.

The protein resides in the cytoplasm. It carries out the reaction RNA(n+1) + phosphate = RNA(n) + a ribonucleoside 5'-diphosphate. In terms of biological role, involved in mRNA degradation. Catalyzes the phosphorolysis of single-stranded polyribonucleotides processively in the 3'- to 5'-direction. The polypeptide is Polyribonucleotide nucleotidyltransferase (Picosynechococcus sp. (strain ATCC 27264 / PCC 7002 / PR-6) (Agmenellum quadruplicatum)).